The chain runs to 199 residues: Prolactin-2 (199 aa).

3 disulfides stabilise this stretch: Cys-4–Cys-11, Cys-58–Cys-174, and Cys-191–Cys-199.

Belongs to the somatotropin/prolactin family.

The protein resides in the secreted. The protein is Prolactin-2 of Alligator mississippiensis (American alligator).